A 341-amino-acid polypeptide reads, in one-letter code: Phenylalanine--tRNA ligase alpha subunit (341 aa).

Mg(2+) is bound at residue E254.

It belongs to the class-II aminoacyl-tRNA synthetase family. Phe-tRNA synthetase alpha subunit type 1 subfamily. In terms of assembly, tetramer of two alpha and two beta subunits. It depends on Mg(2+) as a cofactor.

Its subcellular location is the cytoplasm. It carries out the reaction tRNA(Phe) + L-phenylalanine + ATP = L-phenylalanyl-tRNA(Phe) + AMP + diphosphate + H(+). In Mycoplasma genitalium (strain ATCC 33530 / DSM 19775 / NCTC 10195 / G37) (Mycoplasmoides genitalium), this protein is Phenylalanine--tRNA ligase alpha subunit (pheS).